A 132-amino-acid chain; its full sequence is SH2 domain-containing protein 1B2 (132 aa).

One can recognise an SH2 domain in the interval 5–101 (YYHGCLTKRE…GMVVHLSNPI (97 aa)).

In terms of assembly, interacts with SLAMF1 (phosphorylated). Interacts with CD244. Interacts with Src kinases HCK, LYN, FYN, FGR and LCK (via kinase domains). As to expression, expressed in spleen. Expressed in macrophages, CD8(+) T-Cells and NK cells. Conflictingly found only in NK cells.

It localises to the cytoplasm. Cytoplasmic adapter regulating receptors of the signaling lymphocytic activation molecule (SLAM) family. In SLAM signaling may cooperate with Sh2d1a/SAP. Plays a role in regulation of effector functions of natural killer (NK) cells by controlling signal transduction through Cd244/2b4. However, conflicting results are reported which may reflect the use of different strain backgrounds. Proposed to act as an inhibitor of Cd244-mediated NK cell function including cytotoxicity and IFN-gamma production, the latter found also by triggering Klra4 and Klrk1 next to Cd244. Seems to positively regulate Cd244- and Cd84-dependent NK cell functions implicating Cd244-mediated phosphorylation of Vav1. The sequence is that of SH2 domain-containing protein 1B2 (Sh2d1b2) from Mus musculus (Mouse).